Consider the following 1276-residue polypeptide: Component of gems protein 5 (1276 aa).

The segment at 53–55 (NWY) is interaction with U4 snRNA. WD repeat units follow at residues 92–139 (GHTD…DDHN), 183–223 (EHKA…VFPI), 228–268 (GNNI…TVCK), 271–336 (AHSA…IESG), 364–405 (NDKQ…SPPE), 438–481 (TTKN…IKIQ), 485–522 (GFVY…KDAY), and 530–574 (GIQS…SKIF). The interval 138 to 157 (HNEDTEIGDDFKHGSGGGGS) is disordered. Positions 586–652 (IWKPPPTPTP…NSNNEQQPNK (67 aa)) are disordered. Residues 598–646 (NINNNNNNNNNNNNNNNNNNNNNNNNNNNNNNNNNNNNINNNNNNNSNN) are compositionally biased toward low complexity. WD repeat units lie at residues 688–727 (TFSK…LTRI) and 729–771 (EHKK…NQNE). The segment covering 772–793 (NEKKIDNEKGKENENEKGKENE) has biased composition (basic and acidic residues). The disordered stretch occupies residues 772 to 809 (NEKKIDNEKGKENENEKGKENENENENENENENENENE). Positions 778 to 829 (NEKGKENENEKGKENENENENENENENENENENEIENIVNNNNENDTEIEIK) form a coiled coil. Acidic residues predominate over residues 794–809 (NENENENENENENENE). WD repeat units lie at residues 863–903 (GHKN…AISN) and 906–946 (GHDG…FKTV). The disordered stretch occupies residues 967–997 (ITEQQQQQQQPQSPIKSNPDQSNNPSLVPPI). A compositionally biased stretch (polar residues) spans 979 to 992 (SPIKSNPDQSNNPS).

It belongs to the WD repeat gemin-5 family. As to quaternary structure, part of the core SMN complex.

It localises to the nucleus. It is found in the nucleoplasm. Its subcellular location is the gem. The protein resides in the cytoplasm. Its function is as follows. The SMN complex catalyzes the assembly of small nuclear ribonucleoproteins (snRNPs), the building blocks of the spliceosome, and thereby plays an important role in the splicing of cellular pre-mRNAs. Most spliceosomal snRNPs contain a common set of Sm proteins SNRPB, SNRPD1, SNRPD2, SNRPD3, SNRPE, SNRPF and SNRPG that assemble in a heptameric protein ring on the Sm site of the small nuclear RNA to form the core snRNP (Sm core). In the cytosol, the Sm proteins SNRPD1, SNRPD2, SNRPE, SNRPF and SNRPG are trapped in an inactive 6S pICln-Sm complex by the chaperone CLNS1A that controls the assembly of the core snRNP. To assemble core snRNPs, the SMN complex accepts the trapped 5Sm proteins from CLNS1A forming an intermediate. Binding of snRNA inside 5Sm ultimately triggers eviction of the SMN complex, thereby allowing binding of SNRPD3 and SNRPB to complete assembly of the core snRNP. Within the SMN complex, GEMIN5 recognizes and delivers the small nuclear RNAs (snRNAs) to the SMN complex. Binds to the 7-methylguanosine cap of RNA molecules. The chain is Component of gems protein 5 (gemin5) from Dictyostelium discoideum (Social amoeba).